A 277-amino-acid chain; its full sequence is Undecaprenyl-diphosphatase (277 aa).

Helical transmembrane passes span 1–21, 41–61, 90–110, 114–134, 191–211, 224–244, and 255–275; these read MTWI…FLPI, GAAF…IYFW, WLII…EDWI, FRSL…LALA, AFLL…YTSL, ETLV…AWLM, and FVWY…AGVI.

This sequence belongs to the UppP family.

The protein localises to the cell membrane. The enzyme catalyses di-trans,octa-cis-undecaprenyl diphosphate + H2O = di-trans,octa-cis-undecaprenyl phosphate + phosphate + H(+). In terms of biological role, catalyzes the dephosphorylation of undecaprenyl diphosphate (UPP). Confers resistance to bacitracin. This Micrococcus luteus (strain ATCC 4698 / DSM 20030 / JCM 1464 / CCM 169 / CCUG 5858 / IAM 1056 / NBRC 3333 / NCIMB 9278 / NCTC 2665 / VKM Ac-2230) (Micrococcus lysodeikticus) protein is Undecaprenyl-diphosphatase.